The sequence spans 86 residues: RNA-binding protein Hfq (86 aa).

In terms of domain architecture, Sm spans D9 to V68. A disordered region spans residues R66–A86. Residues D75–A86 show a composition bias toward basic and acidic residues.

This sequence belongs to the Hfq family. As to quaternary structure, homohexamer.

Its function is as follows. RNA chaperone that binds small regulatory RNA (sRNAs) and mRNAs to facilitate mRNA translational regulation in response to envelope stress, environmental stress and changes in metabolite concentrations. Also binds with high specificity to tRNAs. In Pseudomonas putida (strain W619), this protein is RNA-binding protein Hfq.